The following is a 433-amino-acid chain: ATP-dependent RNA helicase SUB2 (433 aa).

Positions 49–77 (TGFRDFLLKPELLRAIGDCGFEHPSEVQQ) match the Q motif motif. Residues 80 to 255 (IPQSILGTDV…KKFMQNPLEI (176 aa)) enclose the Helicase ATP-binding domain. Position 93-100 (93-100 (AKSGLGKT)) interacts with ATP. Positions 202 to 205 (DECD) match the DEAD box motif. The region spanning 267-428 (GLQQYYIKLE…EFPEEGVDPS (162 aa)) is the Helicase C-terminal domain.

It belongs to the DEAD box helicase family. DECD subfamily.

The protein resides in the nucleus. It carries out the reaction ATP + H2O = ADP + phosphate + H(+). In terms of biological role, ATP-binding RNA helicase involved in transcription elongation and required for the export of mRNA out of the nucleus. SUB2 also plays a role in pre-mRNA splicing and spliceosome assembly. May be involved in rDNA and telomeric silencing, and maintenance of genome integrity. The protein is ATP-dependent RNA helicase SUB2 (SUB2) of Scheffersomyces stipitis (strain ATCC 58785 / CBS 6054 / NBRC 10063 / NRRL Y-11545) (Yeast).